A 70-amino-acid polypeptide reads, in one-letter code: Large ribosomal subunit protein bL31c (70 aa).

This sequence belongs to the bacterial ribosomal protein bL31 family. Type A subfamily. Part of the 50S ribosomal subunit.

It localises to the plastid. It is found in the chloroplast. In terms of biological role, binds the 23S rRNA. This Emiliania huxleyi (Coccolithophore) protein is Large ribosomal subunit protein bL31c.